Here is a 472-residue protein sequence, read N- to C-terminus: Fumarate hydratase class II (472 aa).

The tract at residues 1–20 (MSPHENPSVETRTESDTFGP) is disordered. Substrate-binding positions include 105 to 107 (SGT), 136 to 139 (HPND), 146 to 148 (SSN), and T194. The segment at 127–149 (GKRGGKSPVHPNDHCNRGQSSND) is disordered. The active-site Proton donor/acceptor is H195. The active site involves S325. Substrate is bound by residues S326 and 331 to 333 (KVN).

Belongs to the class-II fumarase/aspartase family. Fumarase subfamily. In terms of assembly, homotetramer.

It localises to the cytoplasm. It catalyses the reaction (S)-malate = fumarate + H2O. Its pathway is carbohydrate metabolism; tricarboxylic acid cycle; (S)-malate from fumarate: step 1/1. Functionally, involved in the TCA cycle. Catalyzes the stereospecific interconversion of fumarate to L-malate. The protein is Fumarate hydratase class II of Methylorubrum extorquens (strain ATCC 14718 / DSM 1338 / JCM 2805 / NCIMB 9133 / AM1) (Methylobacterium extorquens).